Reading from the N-terminus, the 339-residue chain is Anthranilate phosphoribosyltransferase (339 aa).

Residues glycine 78, 81-82 (GD), threonine 86, 88-91 (NAST), 106-114 (KHGNRSVTS), and serine 118 each bind 5-phospho-alpha-D-ribose 1-diphosphate. Glycine 78 lines the anthranilate pocket. Mg(2+) is bound at residue serine 90. Residue asparagine 109 coordinates anthranilate. Arginine 164 lines the anthranilate pocket. Aspartate 225 and glutamate 226 together coordinate Mg(2+). Residues 248-265 (TVAPEDVGLDRADPKDVA) are compositionally biased toward basic and acidic residues. The interval 248 to 271 (TVAPEDVGLDRADPKDVAGADPET) is disordered.

The protein belongs to the anthranilate phosphoribosyltransferase family. Homodimer. The cofactor is Mg(2+).

It catalyses the reaction N-(5-phospho-beta-D-ribosyl)anthranilate + diphosphate = 5-phospho-alpha-D-ribose 1-diphosphate + anthranilate. It functions in the pathway amino-acid biosynthesis; L-tryptophan biosynthesis; L-tryptophan from chorismate: step 2/5. Its function is as follows. Catalyzes the transfer of the phosphoribosyl group of 5-phosphorylribose-1-pyrophosphate (PRPP) to anthranilate to yield N-(5'-phosphoribosyl)-anthranilate (PRA). This chain is Anthranilate phosphoribosyltransferase, found in Methanopyrus kandleri (strain AV19 / DSM 6324 / JCM 9639 / NBRC 100938).